A 255-amino-acid polypeptide reads, in one-letter code: uncharacterized protein (255 aa).

2 helical membrane-spanning segments follow: residues 2–22 and 168–188; these read LLPA…YGVL and VASV…FNLF.

The protein localises to the cell membrane. This is an uncharacterized protein from Mycobacterium tuberculosis (strain ATCC 25618 / H37Rv).